The chain runs to 115 residues: OV39 antigen (115 aa).

The chain is OV39 antigen (OV39) from Onchocerca volvulus.